We begin with the raw amino-acid sequence, 454 residues long: LETM1 domain-containing protein YLH47, mitochondrial (454 aa).

The N-terminal 45 residues, 1–45 (MLKYRSLPIKRAIHHPAPGITPISPRIMVSRLRVIPSFNLKFNRW), are a transit peptide targeting the mitochondrion. Residues 46–136 (NSSVPESSKK…LKRTTQDIVR (91 aa)) lie on the Mitochondrial intermembrane side of the membrane. Residues 51–73 (ESSKKELKTTDGNQESASKVSPV) are disordered. Residues 137–157 (LVPFAAFLIIPFAELLLPFAL) form a helical membrane-spanning segment. At 158–454 (KLFPNLLPST…IGEAAAIKEK (297 aa)) the chain is on the mitochondrial matrix side. The 195-residue stretch at 177-371 (KLENLRNTRK…LCDVLIGIPD (195 aa)) folds into the Letm1 RBD domain. Residues 376–423 (EVKVNVVKEDEASAKQKLKQLREQEEIMKEEEQQEENAIVSVKDELSL) adopt a coiled-coil conformation. Composition is skewed to basic and acidic residues over residues 420–430 (ELSLDDQDKNI) and 437–454 (VKPHDTKPIGEAAAIKEK). Residues 420-454 (ELSLDDQDKNIDAAAPDVKPHDTKPIGEAAAIKEK) are disordered.

As to quaternary structure, associates with the mitochondrial ribosomes.

The protein localises to the mitochondrion inner membrane. Its function is as follows. Involved in mitochondrial potassium homeostasis through the mitochondrial K(+)/H(+) exchange regulation. The sequence is that of LETM1 domain-containing protein YLH47, mitochondrial (YLH47) from Saccharomyces cerevisiae (strain ATCC 204508 / S288c) (Baker's yeast).